The sequence spans 185 residues: Elongation factor P (185 aa).

The protein belongs to the elongation factor P family.

It localises to the cytoplasm. It functions in the pathway protein biosynthesis; polypeptide chain elongation. Involved in peptide bond synthesis. Stimulates efficient translation and peptide-bond synthesis on native or reconstituted 70S ribosomes in vitro. Probably functions indirectly by altering the affinity of the ribosome for aminoacyl-tRNA, thus increasing their reactivity as acceptors for peptidyl transferase. This is Elongation factor P from Synechococcus sp. (strain JA-2-3B'a(2-13)) (Cyanobacteria bacterium Yellowstone B-Prime).